Reading from the N-terminus, the 129-residue chain is Transcription factor bHLH138 (129 aa).

Residues Met1–Gly18 show a composition bias toward basic and acidic residues. Positions Met1–Thr24 are disordered. One can recognise a bHLH domain in the interval Ser19–Leu68.

This sequence belongs to the bHLH protein family.

The protein localises to the nucleus. The protein is Transcription factor bHLH138 of Arabidopsis thaliana (Mouse-ear cress).